The chain runs to 518 residues: Membrane-bound lytic murein transglycosylase F (518 aa).

An N-terminal signal peptide occupies residues 1 to 21; sequence MKKLKINYLFIGILALLLAVA. The interval 22 to 269 is non-LT domain; it reads LWPSIPWFGK…RIEEKYLGHG (248 aa). The LT domain stretch occupies residues 270-518; it reads DDFDYVDTRT…SRKGSEEKQN (249 aa). Residue Glu314 is part of the active site.

This sequence in the N-terminal section; belongs to the bacterial solute-binding protein 3 family. In the C-terminal section; belongs to the transglycosylase Slt family.

The protein resides in the cell outer membrane. The catalysed reaction is Exolytic cleavage of the (1-&gt;4)-beta-glycosidic linkage between N-acetylmuramic acid (MurNAc) and N-acetylglucosamine (GlcNAc) residues in peptidoglycan, from either the reducing or the non-reducing ends of the peptidoglycan chains, with concomitant formation of a 1,6-anhydrobond in the MurNAc residue.. Functionally, murein-degrading enzyme that degrades murein glycan strands and insoluble, high-molecular weight murein sacculi, with the concomitant formation of a 1,6-anhydromuramoyl product. Lytic transglycosylases (LTs) play an integral role in the metabolism of the peptidoglycan (PG) sacculus. Their lytic action creates space within the PG sacculus to allow for its expansion as well as for the insertion of various structures such as secretion systems and flagella. The protein is Membrane-bound lytic murein transglycosylase F of Escherichia coli O6:K15:H31 (strain 536 / UPEC).